A 123-amino-acid polypeptide reads, in one-letter code: Class I hydrophobin 2 (123 aa).

Residues 1-16 (MYAYTVIAFLAASVAA) form the signal peptide. 4 disulfides stabilise this stretch: C35-C97, C43-C91, C44-C72, and C98-C116.

The protein belongs to the fungal hydrophobin family.

The protein localises to the secreted. The protein resides in the cell wall. In terms of biological role, aerial growth, conidiation, and dispersal of filamentous fungi in the environment rely upon a capability of their secreting small amphipathic proteins called hydrophobins (HPBs) with low sequence identity. Class I can self-assemble into an outermost layer of rodlet bundles on aerial cell surfaces, conferring cellular hydrophobicity that supports fungal growth, development and dispersal; whereas Class II form highly ordered films at water-air interfaces through intermolecular interactions but contribute nothing to the rodlet structure. HYD1 and HYD2 are required for the structural integrity of the long aerial chains of microconidia. Does not seem to be important for the ability to cause seedling disease. In Gibberella moniliformis (Maize ear and stalk rot fungus), this protein is Class I hydrophobin 2.